Reading from the N-terminus, the 217-residue chain is Adenylate kinase (217 aa).

11 to 16 (GAGKGT) is an ATP binding site. The interval 31–60 (STGDMFREAMANETPVGLEAKSYIDKGNLV) is NMP. AMP contacts are provided by residues threonine 32, arginine 37, 58 to 60 (NLV), 86 to 89 (GFPR), and glutamine 93. Positions 127 to 165 (ARYICKKCGATYNKISNPTKVEGTCDRCGGHEFFQREDD) are LID. Arginine 128 lines the ATP pocket. 2 residues coordinate Zn(2+): cysteine 131 and cysteine 134. 137 to 138 (TY) provides a ligand contact to ATP. Residues cysteine 151 and cysteine 154 each coordinate Zn(2+). 2 residues coordinate AMP: arginine 162 and arginine 173. Glutamine 201 serves as a coordination point for ATP.

It belongs to the adenylate kinase family. As to quaternary structure, monomer.

The protein localises to the cytoplasm. It catalyses the reaction AMP + ATP = 2 ADP. It functions in the pathway purine metabolism; AMP biosynthesis via salvage pathway; AMP from ADP: step 1/1. Its function is as follows. Catalyzes the reversible transfer of the terminal phosphate group between ATP and AMP. Plays an important role in cellular energy homeostasis and in adenine nucleotide metabolism. This Lactobacillus johnsonii (strain CNCM I-12250 / La1 / NCC 533) protein is Adenylate kinase.